The chain runs to 102 residues: UPF0328 protein ECU10_1820 (102 aa).

Belongs to the UPF0328 family.

This is UPF0328 protein ECU10_1820 from Encephalitozoon cuniculi (strain GB-M1) (Microsporidian parasite).